A 426-amino-acid chain; its full sequence is 3-phosphoshikimate 1-carboxyvinyltransferase (426 aa).

K22, S23, and R27 together coordinate 3-phosphoshikimate. K22 serves as a coordination point for phosphoenolpyruvate. Phosphoenolpyruvate-binding residues include G96 and R124. Residues S170, S171, Q172, S198, D314, N337, and K341 each coordinate 3-phosphoshikimate. A phosphoenolpyruvate-binding site is contributed by Q172. D314 (proton acceptor) is an active-site residue. Residues R345, R387, and K412 each coordinate phosphoenolpyruvate.

Belongs to the EPSP synthase family. Monomer.

The protein resides in the cytoplasm. It carries out the reaction 3-phosphoshikimate + phosphoenolpyruvate = 5-O-(1-carboxyvinyl)-3-phosphoshikimate + phosphate. Its pathway is metabolic intermediate biosynthesis; chorismate biosynthesis; chorismate from D-erythrose 4-phosphate and phosphoenolpyruvate: step 6/7. Its function is as follows. Catalyzes the transfer of the enolpyruvyl moiety of phosphoenolpyruvate (PEP) to the 5-hydroxyl of shikimate-3-phosphate (S3P) to produce enolpyruvyl shikimate-3-phosphate and inorganic phosphate. The chain is 3-phosphoshikimate 1-carboxyvinyltransferase from Vibrio cholerae serotype O1 (strain ATCC 39541 / Classical Ogawa 395 / O395).